Here is a 302-residue protein sequence, read N- to C-terminus: Short-chain dehydrogenase/reductase 3 (302 aa).

4 consecutive transmembrane segments (helical) span residues 9-29 (LVMF…GLVL), 170-190 (IVCL…DYCT), 195-215 (AFAF…VSAT), and 253-273 (AVQL…LVIL). Ser175 contributes to the substrate binding site. The active-site Proton acceptor is Tyr188.

The protein belongs to the short-chain dehydrogenases/reductases (SDR) family. In terms of tissue distribution, widely expressed with highest levels found in heart, placenta, lung, liver, kidney, pancreas, thyroid, testis, stomach, trachea and spinal cord. Lower levels found in skeletal muscle, intestine and lymph node. No expression detected in brain. In the retina, expressed in cone but not rod outer segments.

The protein resides in the membrane. It catalyses the reaction all-trans-retinol + NADP(+) = all-trans-retinal + NADPH + H(+). In terms of biological role, catalyzes the reduction of all-trans-retinal to all-trans-retinol in the presence of NADPH. This Homo sapiens (Human) protein is Short-chain dehydrogenase/reductase 3 (DHRS3).